We begin with the raw amino-acid sequence, 827 residues long: Valine--tRNA ligase (827 aa).

A 'HIGH' region motif is present at residues 41–51 (PNVTGQLHLGH). The 'KMSKS' region signature appears at 511 to 515 (KMTKS). Lys514 contributes to the ATP binding site. The stretch at 765–827 (ENLSKEKAQK…KELLDEKIIE (63 aa)) forms a coiled coil.

It belongs to the class-I aminoacyl-tRNA synthetase family. ValS type 1 subfamily. As to quaternary structure, monomer.

The protein resides in the cytoplasm. The catalysed reaction is tRNA(Val) + L-valine + ATP = L-valyl-tRNA(Val) + AMP + diphosphate. Its function is as follows. Catalyzes the attachment of valine to tRNA(Val). As ValRS can inadvertently accommodate and process structurally similar amino acids such as threonine, to avoid such errors, it has a 'posttransfer' editing activity that hydrolyzes mischarged Thr-tRNA(Val) in a tRNA-dependent manner. This chain is Valine--tRNA ligase, found in Mycoplasmopsis pulmonis (strain UAB CTIP) (Mycoplasma pulmonis).